A 274-amino-acid chain; its full sequence is MQPLHGNCLIAYARHKYILTMVNGEYRYFNGGDLVFADASQIQVDKCVENFVLVSRDTLSLFLPMLKEEALKLHAHKKVPSLLVHHCTRDIPVFQEVAQLSQNKNLRYAEMLRKRALIFALLSVFLEDTQFIPLLLNVLQPNMRTRVCTVINNNIAHEWTLARIASELLMSPSLLKKKLREEGTSYSQLLTECRMQRALQLIVIYGVSIKRVAVSCGYHSVSYFIYVFRNYYGMTPTEYQERSAQELPNCGPAASMAAQGNFYGTDRSAEGIRL.

The HTH araC/xylS-type domain occupies 145 to 242 (TRVCTVINNN…GMTPTEYQER (98 aa)). 2 consecutive DNA-binding regions (H-T-H motif) follow at residues 162–183 (ARIA…REEG) and 209–232 (IKRV…RNYY).

In terms of assembly, homodimer.

In terms of biological role, positively regulates the expression of about fifteen genes involved in acid resistance such as gadA, gadB and gadC. Depending on the conditions (growth phase and medium), can repress gadW. Negatively regulates perA expression in acidic conditions and positively regulates it in alkaline conditions. This Escherichia coli O127:H6 (strain E2348/69 / EPEC) protein is HTH-type transcriptional regulator GadX (gadX).